Reading from the N-terminus, the 614-residue chain is UvrABC system protein C (614 aa).

The region spanning 14 to 91 (TSPGCYIHKD…IKENKPKYNI (78 aa)) is the GIY-YIG domain. A UVR domain is found at 196 to 231 (DKIIDDLKSKMAVAAQSMEFERAAEYRDLIQAIGTL). Positions 595–614 (LSQVAEERVDYQTEGNHNEP) are disordered. A compositionally biased stretch (basic and acidic residues) spans 599 to 614 (AEERVDYQTEGNHNEP).

It belongs to the UvrC family. As to quaternary structure, interacts with UvrB in an incision complex.

It localises to the cytoplasm. The UvrABC repair system catalyzes the recognition and processing of DNA lesions. UvrC both incises the 5' and 3' sides of the lesion. The N-terminal half is responsible for the 3' incision and the C-terminal half is responsible for the 5' incision. This is UvrABC system protein C from Streptococcus pneumoniae serotype 2 (strain D39 / NCTC 7466).